Here is a 430-residue protein sequence, read N- to C-terminus: Tektin-2 (430 aa).

Coiled coils occupy residues 81–162 and 265–379; these read CLTD…FEKL and FRKR…DIAC.

Belongs to the tektin family. As to quaternary structure, microtubule inner protein component of sperm flagellar doublet microtubules. May interact with CCDC172. In terms of processing, tyrosine phosphorylated. Post-translationally, ubiquitinated, leading to its degradation. Deubiquitinated by USP16, promoting its stability. Expressed in trachea multiciliated cells.

It localises to the cytoplasm. It is found in the cytoskeleton. The protein resides in the cilium axoneme. Its subcellular location is the flagellum axoneme. The protein localises to the microtubule organizing center. Functionally, microtubule inner protein (MIP) part of the dynein-decorated doublet microtubules (DMTs) in cilia and flagellar axoneme. Plays a key role in the assembly or attachment of the inner dynein arm to microtubules in sperm flagella and tracheal cilia. Forms filamentous polymers in the walls of ciliary and flagellar microtubules. In Bos taurus (Bovine), this protein is Tektin-2 (TEKT2).